Here is a 472-residue protein sequence, read N- to C-terminus: Inactive CLIP domain-containing serine protease A3 (472 aa).

2 helical membrane passes run 51-71 (ISFV…WSSM) and 78-98 (LPAL…HTYA). 4 N-linked (GlcNAc...) asparagine glycosylation sites follow: N122, N133, N149, and N152. One can recognise a Peptidase S1 domain in the interval 223–470 (VAAAKAPAAG…YVPWITSTVS (248 aa)). Intrachain disulfides connect C354/C428, C386/C408, and C418/C446.

Belongs to the peptidase S1 family. CLIP subfamily. Expressed at highest levels in head and salivary gland. Expressed in ovary and carcass. Minimal expression in midgut.

It is found in the membrane. In terms of biological role, probable inactive serine protease. Induces migration of cultured mouse embryonic fibroblasts. (Microbial infection) Promotes dengue virus type 2 replication in the host. In Aedes aegypti (Yellowfever mosquito), this protein is Inactive CLIP domain-containing serine protease A3.